The chain runs to 492 residues: Nuclear hormone receptor family member nhr-4 (492 aa).

Positions 47-122 form a DNA-binding region, nuclear receptor; the sequence is RLICDVCGDV…VGMNPDSVQN (76 aa). 2 NR C4-type zinc fingers span residues 50–70 and 86–110; these read CDVC…CNGC and CRFG…LKKC. A disordered region spans residues 121–143; sequence QNERDRNAKNGGMGGPMSSPTQS. The 267-residue stretch at 215 to 481 folds into the NR LBD domain; sequence MDFSIHSAVL…ELIQATHKTT (267 aa).

The protein belongs to the nuclear hormone receptor family.

Its subcellular location is the nucleus. Orphan nuclear receptor. This chain is Nuclear hormone receptor family member nhr-4 (nhr-4), found in Caenorhabditis elegans.